Consider the following 689-residue polypeptide: SH3 domain-binding protein 1 (689 aa).

Residues 1 to 11 (MMKRQLHRMRQ) show a composition bias toward basic residues. The interval 1 to 24 (MMKRQLHRMRQLAHTGSSGRTPET) is disordered. Residues 1–275 (MMKRQLHRMR…TAAPFSRVYG (275 aa)) form an interaction with CGNL1 region. The BAR domain maps to 17–262 (SSGRTPETAE…RDNHSQADSS (246 aa)). Phosphoserine occurs at positions 241 and 262. The Rho-GAP domain maps to 276 to 469 (VSLRTHLQDL…VLIQNADTLF (194 aa)). The interaction with CD2AP stretch occupies residues 470 to 689 (PGDINFSVSG…RPRGLISETD (220 aa)). The segment at 507-689 (TAATPTPTPA…RPRGLISETD (183 aa)) is disordered. Phosphoserine is present on residues Ser539 and Ser545. A compositionally biased stretch (pro residues) spans 565–575 (PARPTMPPPQP). A compositionally biased stretch (low complexity) spans 576 to 594 (SSSRSSPPALSLPAGSVSP). Ser586 is modified (phosphoserine). Thr596 carries the post-translational modification Phosphothreonine. An SH3-binding motif is present at residues 611–620 (APTVPPPLPP). The segment covering 613–625 (TVPPPLPPAPPQP) has biased composition (pro residues). Ser641 carries the phosphoserine modification. Residues 670-680 (PPTPVLPPQPR) show a composition bias toward pro residues.

Interacts with RAC1. Interacts with the exocyst via EXOC4 and EXOC8; required for the localization of both SH3BP1 and the exocyst to the leading edge of migrating cells. Interacts with CD2AP and CGNL1; probably part of a complex at cell junctions. Interacts with CAPZA1; recruits CAPZA1 to forming cell junctions. May interact with AFDN. Interacts with PLXND1; they dissociate upon SEMA3E binding to PLXND1 allowing SH3BP1 to transduce downstream signal through RAC1 inactivation. Interacts with ABL1, GRB2 and SRC (via SH3 domain).

The protein resides in the cell projection. Its subcellular location is the cell junction. It localises to the tight junction. It is found in the adherens junction. The protein localises to the phagocytic cup. The protein resides in the nucleus. Its subcellular location is the cytoplasm. It localises to the cytosol. Functionally, GTPase activating protein/GAP which specifically converts GTP-bound Rho-type GTPases including RAC1 and CDC42 in their inactive GDP-bound form. By specifically inactivating RAC1 at the leading edge of migrating cells, it regulates the spatiotemporal organization of cell protrusions which is important for proper cell migration. Also negatively regulates CDC42 in the process of actin remodeling and the formation of epithelial cell junctions. Through its GAP activity toward RAC1 and/or CDC42 plays a specific role in phagocytosis of large particles. Specifically recruited by a PI3 kinase/PI3K-dependent mechanism to sites of large particles engagement, inactivates RAC1 and/or CDC42 allowing the reorganization of the underlying actin cytoskeleton required for engulfment. It also plays a role in angiogenesis and the process of repulsive guidance as part of a semaphorin-plexin signaling pathway. Following the binding of PLXND1 to extracellular SEMA3E it dissociates from PLXND1 and inactivates RAC1, inducing the intracellular reorganization of the actin cytoskeleton and the collapse of cells. This is SH3 domain-binding protein 1 from Rattus norvegicus (Rat).